We begin with the raw amino-acid sequence, 224 residues long: UPF0758 protein PFLU_5982 (224 aa).

The region spanning 102–224 (VLESPKAVRD…PLSMAEYGWL (123 aa)) is the MPN domain. Residues His-173, His-175, and Asp-186 each coordinate Zn(2+). Residues 173 to 186 (HNHPSGSLEPSAAD) carry the JAMM motif motif.

The protein belongs to the UPF0758 family.

In Pseudomonas fluorescens (strain SBW25), this protein is UPF0758 protein PFLU_5982.